Reading from the N-terminus, the 849-residue chain is Neprilysin-1 (849 aa).

At 1 to 113 (MSQQHEATAA…LKESQQRRRL (113 aa)) the chain is on the cytoplasmic side. The segment covering 41–61 (QQQVQHQAPHQMQQQQQQQQQ) has biased composition (low complexity). The disordered stretch occupies residues 41–63 (QQQVQHQAPHQMQQQQQQQQQNK). The chain crosses the membrane as a helical; Signal-anchor for type II membrane protein span at residues 114-134 (LVLAIAFTVLGAAIGALAIYF). Residues 135–849 (ASVHQRCHLY…MNPAEKCSVW (715 aa)) lie on the Extracellular side of the membrane. A compositionally biased stretch (basic and acidic residues) spans 146 to 155 (LEPDNDDRPN). Positions 146 to 167 (LEPDNDDRPNGRWNQDSGSAHE) are disordered. The region spanning 172 to 849 (ICMTQECVRT…MNPAEKCSVW (678 aa)) is the Peptidase M13 domain. 5 disulfide bridges follow: Cys-173/Cys-178, Cys-196/Cys-834, Cys-204/Cys-794, Cys-260/Cys-512, and Cys-721/Cys-846. N-linked (GlcNAc...) asparagine glycosylation is found at Asn-309, Asn-326, Asn-393, Asn-589, and Asn-599. Position 684 (His-684) interacts with Zn(2+). Residue Glu-685 is part of the active site. Position 688 (His-688) interacts with Zn(2+). N-linked (GlcNAc...) asparagine glycosylation occurs at Asn-709. Glu-746 serves as a coordination point for Zn(2+). The active-site Proton donor is the Asp-750. The N-linked (GlcNAc...) asparagine glycan is linked to Asn-778.

This sequence belongs to the peptidase M13 family. The cofactor is Zn(2+). In terms of tissue distribution, expressed in the testicular tube, near and in the seminal vesicles. In adults and third-instar larvae, expressed in the midgut and in the mushroom bodies of the brain and neurons in the pars intercerebralis. Also expressed in neurons of the ventral ganglion and imaginal disks (wing and leg) of third-instar larvae. In stage 17 embryos, expressed in the peripheral nervous system, pharynx and midgut.

It localises to the cell membrane. The enzyme catalyses Preferential cleavage of polypeptides between hydrophobic residues, particularly with Phe or Tyr at P1'.. Functionally, metalloendoprotease which functions in fertility and memory formation. Required in the dorsal paired medial neurons and alpha/beta mushroom body neurons for the proper formation of long-term and middle-term memories. Required in males to maximise egg-laying in female mates and is also required in females for their fertility. The protein is Neprilysin-1 of Drosophila melanogaster (Fruit fly).